Reading from the N-terminus, the 999-residue chain is Lysosomal alpha-mannosidase (999 aa).

Residues 1 to 25 (MVGDARPSGVRAGGCRGAVGSRTSS) form a disordered region. The N-terminal stretch at 1-50 (MVGDARPSGVRAGGCRGAVGSRTSSRALRPPLPPLSSLFVLFLAAPCAWA) is a signal peptide. 2 residues coordinate Zn(2+): histidine 73 and aspartate 75. N-linked (GlcNAc...) asparagine glycosylation is present at asparagine 134. Aspartate 197 is a binding site for Zn(2+). Aspartate 197 functions as the Nucleophile in the catalytic mechanism. Cysteine 269 and cysteine 274 are disulfide-bonded. The N-linked (GlcNAc...) asparagine glycan is linked to asparagine 369. Residue histidine 448 participates in Zn(2+) binding. Cysteine 495 and cysteine 503 are oxidised to a cystine. The N-linked (GlcNAc...) asparagine glycan is linked to asparagine 499. A propeptide spanning residues 591 to 621 (SRDLVIQNEYLRARFDPNTGLLMELENLEQN) is cleaved from the precursor. Residues asparagine 634, asparagine 640, asparagine 681, asparagine 755, and asparagine 919 are each glycosylated (N-linked (GlcNAc...) asparagine).

The protein belongs to the glycosyl hydrolase 38 family. As to quaternary structure, homodimer. Requires Zn(2+) as cofactor. Processed into 5 peptides of 35/38 kDa (A), 11/13 kDa (B) and 22 kDa (C), 38 kDa (D) and 13/15 kDa (E). The A, B and C peptides are disulfide-linked into a 67 kDa complex. Post-translationally, heavily glycosylated. Some sugar chains are of the high-mannose type.

It localises to the lysosome. The catalysed reaction is Hydrolysis of terminal, non-reducing alpha-D-mannose residues in alpha-D-mannosides.. Necessary for the catabolism of N-linked carbohydrates released during glycoprotein turnover. In Bos taurus (Bovine), this protein is Lysosomal alpha-mannosidase (MAN2B1).